Here is a 74-residue protein sequence, read N- to C-terminus: UPF0346 protein YozE (74 aa).

It belongs to the UPF0346 family.

This Bacillus subtilis (strain 168) protein is UPF0346 protein YozE (yozE).